Consider the following 507-residue polypeptide: ATP synthase subunit alpha (507 aa).

Residue 169 to 176 (GDRQIGKT) coordinates ATP.

Belongs to the ATPase alpha/beta chains family. As to quaternary structure, F-type ATPases have 2 components, CF(1) - the catalytic core - and CF(0) - the membrane proton channel. CF(1) has five subunits: alpha(3), beta(3), gamma(1), delta(1), epsilon(1). CF(0) has three main subunits: a(1), b(2) and c(9-12). The alpha and beta chains form an alternating ring which encloses part of the gamma chain. CF(1) is attached to CF(0) by a central stalk formed by the gamma and epsilon chains, while a peripheral stalk is formed by the delta and b chains.

It localises to the cell inner membrane. It catalyses the reaction ATP + H2O + 4 H(+)(in) = ADP + phosphate + 5 H(+)(out). Functionally, produces ATP from ADP in the presence of a proton gradient across the membrane. The alpha chain is a regulatory subunit. The protein is ATP synthase subunit alpha of Desulfotalea psychrophila (strain LSv54 / DSM 12343).